The following is a 489-amino-acid chain: Glutamate--tRNA ligase (489 aa).

The 'HIGH' region signature appears at 11–21; that stretch reads PSPTGHLHIGN. The 'KMSKS' region signature appears at 252-256; it reads KLSKR. Lys-255 provides a ligand contact to ATP.

The protein belongs to the class-I aminoacyl-tRNA synthetase family. Glutamate--tRNA ligase type 1 subfamily. Monomer.

Its subcellular location is the cytoplasm. It catalyses the reaction tRNA(Glu) + L-glutamate + ATP = L-glutamyl-tRNA(Glu) + AMP + diphosphate. In terms of biological role, catalyzes the attachment of glutamate to tRNA(Glu) in a two-step reaction: glutamate is first activated by ATP to form Glu-AMP and then transferred to the acceptor end of tRNA(Glu). This chain is Glutamate--tRNA ligase, found in Oceanobacillus iheyensis (strain DSM 14371 / CIP 107618 / JCM 11309 / KCTC 3954 / HTE831).